The sequence spans 127 residues: Putative iron-sulfur cluster insertion protein ErpA (127 aa).

Polar residues predominate over residues 1 to 14 (MNTPFNDGSGQTDP). The interval 1–20 (MNTPFNDGSGQTDPMTDIPT) is disordered. Positions 55, 119, and 121 each coordinate iron-sulfur cluster.

This sequence belongs to the HesB/IscA family. Homodimer. Iron-sulfur cluster serves as cofactor.

Required for insertion of 4Fe-4S clusters. The sequence is that of Putative iron-sulfur cluster insertion protein ErpA from Nitrosospira multiformis (strain ATCC 25196 / NCIMB 11849 / C 71).